Reading from the N-terminus, the 267-residue chain is Tryptophan synthase alpha chain (267 aa).

Residues glutamate 49 and aspartate 60 each act as proton acceptor in the active site.

This sequence belongs to the TrpA family. In terms of assembly, tetramer of two alpha and two beta chains.

The enzyme catalyses (1S,2R)-1-C-(indol-3-yl)glycerol 3-phosphate + L-serine = D-glyceraldehyde 3-phosphate + L-tryptophan + H2O. It functions in the pathway amino-acid biosynthesis; L-tryptophan biosynthesis; L-tryptophan from chorismate: step 5/5. The alpha subunit is responsible for the aldol cleavage of indoleglycerol phosphate to indole and glyceraldehyde 3-phosphate. This chain is Tryptophan synthase alpha chain, found in Geotalea uraniireducens (strain Rf4) (Geobacter uraniireducens).